The chain runs to 149 residues: MKVILLRDVPKIGKKGEIKEVSDGYARNYLIPRGFAKEYTEGLERAIKHEKEIEKRKKEREREESEKILKELKKRTHVVKVKAGEGGKIFGAVTAATVAEEISKTTGLKLDKRWFKLDKPIKELGEYSLEVSLPGGVKDTIKIRVEREE.

This sequence belongs to the bacterial ribosomal protein bL9 family.

Its function is as follows. Binds to the 23S rRNA. In Thermotoga maritima (strain ATCC 43589 / DSM 3109 / JCM 10099 / NBRC 100826 / MSB8), this protein is Large ribosomal subunit protein bL9.